The sequence spans 156 residues: Small ribosomal subunit protein uS7 (156 aa).

This sequence belongs to the universal ribosomal protein uS7 family. Part of the 30S ribosomal subunit. Contacts proteins S9 and S11.

In terms of biological role, one of the primary rRNA binding proteins, it binds directly to 16S rRNA where it nucleates assembly of the head domain of the 30S subunit. Is located at the subunit interface close to the decoding center, probably blocks exit of the E-site tRNA. The protein is Small ribosomal subunit protein uS7 of Maricaulis maris (strain MCS10) (Caulobacter maris).